The primary structure comprises 84 residues: Magnetosome protein MamG (84 aa).

The Cytoplasmic portion of the chain corresponds to Met-1–Lys-3. A helical membrane pass occupies residues Gly-4–Val-24. Residues Ser-25 to Cys-40 are Lumenal-facing. Residues Leu-41–Gly-48 form an LG repeat region. Residues Leu-41–Ala-61 traverse the membrane as a helical segment. Over Cys-62 to Ala-84 the chain is Cytoplasmic.

Belongs to the magnetosome MamG (TC 9.B.95) protein family.

The protein localises to the magnetosome membrane. In terms of biological role, plays a role in regulating magnetite crystal size. This chain is Magnetosome protein MamG, found in Magnetospirillum gryphiswaldense (strain DSM 6361 / JCM 21280 / NBRC 15271 / MSR-1).